Reading from the N-terminus, the 145-residue chain is Nickel-responsive regulator (145 aa).

4 residues coordinate Ni(2+): H77, H88, H90, and C96.

Belongs to the transcriptional regulatory CopG/NikR family. In terms of assembly, homotetramer. The cofactor is Ni(2+).

Transcriptional repressor of the nikABCDE operon. Is active in the presence of excessive concentrations of intracellular nickel. This is Nickel-responsive regulator from Edwardsiella ictaluri (strain 93-146).